The primary structure comprises 110 residues: MTVFKQIIDGLIDCEKVFENENFIAIKDRFPQAPVHLLIIPKKPIPRFQDIPGDEMILMAEAGKIVQELAAEFGIADGYRVVINNGAEGGQAVFHLHIHLLGGRPLGAIA.

An HIT domain is found at 3-110 (VFKQIIDGLI…LGGRPLGAIA (108 aa)). A Histidine triad motif motif is present at residues 95-99 (HLHIH).

The chain is HIT-like protein CPn_0488/CP_0266/CPj0488/CpB0508 from Chlamydia pneumoniae (Chlamydophila pneumoniae).